Here is a 456-residue protein sequence, read N- to C-terminus: Adenylosuccinate lyase (456 aa).

N(6)-(1,2-dicarboxyethyl)-AMP-binding positions include 15-16, 90-92, and 122-123; these read RY, NHD, and TS. Catalysis depends on H171, which acts as the Proton donor/acceptor. Q247 lines the N(6)-(1,2-dicarboxyethyl)-AMP pocket. S295 acts as the Proton donor/acceptor in catalysis. N(6)-(1,2-dicarboxyethyl)-AMP-binding positions include S296, 301 to 303, N309, R335, and 340 to 344; these read KVN and STVLR.

It belongs to the lyase 1 family. Adenylosuccinate lyase subfamily. In terms of assembly, homotetramer. Residues from neighboring subunits contribute catalytic and substrate-binding residues to each active site.

The catalysed reaction is N(6)-(1,2-dicarboxyethyl)-AMP = fumarate + AMP. It carries out the reaction (2S)-2-[5-amino-1-(5-phospho-beta-D-ribosyl)imidazole-4-carboxamido]succinate = 5-amino-1-(5-phospho-beta-D-ribosyl)imidazole-4-carboxamide + fumarate. The protein operates within purine metabolism; AMP biosynthesis via de novo pathway; AMP from IMP: step 2/2. Its pathway is purine metabolism; IMP biosynthesis via de novo pathway; 5-amino-1-(5-phospho-D-ribosyl)imidazole-4-carboxamide from 5-amino-1-(5-phospho-D-ribosyl)imidazole-4-carboxylate: step 2/2. Its function is as follows. Catalyzes two reactions in de novo purine nucleotide biosynthesis. Catalyzes the breakdown of 5-aminoimidazole- (N-succinylocarboxamide) ribotide (SAICAR or 2-[5-amino-1-(5-phospho-beta-D-ribosyl)imidazole-4-carboxamido]succinate) to 5-aminoimidazole-4-carboxamide ribotide (AICAR or 5-amino-1-(5-phospho-beta-D-ribosyl)imidazole-4-carboxamide) and fumarate, and of adenylosuccinate (ADS or N(6)-(1,2-dicarboxyethyl)-AMP) to adenosine monophosphate (AMP) and fumarate. This is Adenylosuccinate lyase (purB) from Haemophilus influenzae (strain ATCC 51907 / DSM 11121 / KW20 / Rd).